The following is a 486-amino-acid chain: Probable glycine dehydrogenase (decarboxylating) subunit 2 (486 aa).

A disordered region spans residues 1-26 (MLIFESSRPGRQARAQAPKPTAATND). At Lys-264 the chain carries N6-(pyridoxal phosphate)lysine.

It belongs to the GcvP family. C-terminal subunit subfamily. As to quaternary structure, the glycine cleavage system is composed of four proteins: P, T, L and H. In this organism, the P 'protein' is a heterodimer of two subunits. Requires pyridoxal 5'-phosphate as cofactor.

It carries out the reaction N(6)-[(R)-lipoyl]-L-lysyl-[glycine-cleavage complex H protein] + glycine + H(+) = N(6)-[(R)-S(8)-aminomethyldihydrolipoyl]-L-lysyl-[glycine-cleavage complex H protein] + CO2. The glycine cleavage system catalyzes the degradation of glycine. The P protein binds the alpha-amino group of glycine through its pyridoxal phosphate cofactor; CO(2) is released and the remaining methylamine moiety is then transferred to the lipoamide cofactor of the H protein. The chain is Probable glycine dehydrogenase (decarboxylating) subunit 2 from Nitrosococcus oceani (strain ATCC 19707 / BCRC 17464 / JCM 30415 / NCIMB 11848 / C-107).